Consider the following 171-residue polypeptide: Protein BTG1 (171 aa).

Ser-159 carries the phosphoserine modification.

It belongs to the BTG family. In terms of assembly, interacts with CNOT7 and CNOT8.

In terms of biological role, anti-proliferative protein. The sequence is that of Protein BTG1 (Btg1) from Rattus norvegicus (Rat).